Reading from the N-terminus, the 210-residue chain is MRVITLSGITLFLLASLASAIELTFKLENQEKQCYYLDSFHTGEKTHFTYAVQSGGSFDVDYMIKAPSQKTVALGKKRRQADVFFTLEEKGEYEFCFDNHMSTFTDKIVTMEITMENELSLPALTRDEAKDYKKDSMQSTVLEISTALSEIDRVQNYFKTREHRNYSTVKSTQARIFWFSLAESIMVVALSALQVFIVKTFFKRSGRRGV.

The N-terminal stretch at 1–20 is a signal peptide; the sequence is MRVITLSGITLFLLASLASA. At 21-175 the chain is on the lumenal side; it reads IELTFKLENQ…YSTVKSTQAR (155 aa). Positions 32–115 constitute a GOLD domain; the sequence is KQCYYLDSFH…DKIVTMEITM (84 aa). A glycan (N-linked (GlcNAc...) asparagine) is linked at N165. The chain crosses the membrane as a helical span at residues 176-196; that stretch reads IFWFSLAESIMVVALSALQVF. At 197–210 the chain is on the cytoplasmic side; the sequence is IVKTFFKRSGRRGV.

This sequence belongs to the EMP24/GP25L family.

The protein localises to the endoplasmic reticulum membrane. This is an uncharacterized protein from Schizosaccharomyces pombe (strain 972 / ATCC 24843) (Fission yeast).